We begin with the raw amino-acid sequence, 202 residues long: LexA repressor (202 aa).

Positions 28–48 (RAEIAQRLGFRSPNAAEEHLK) form a DNA-binding region, H-T-H motif. Residues serine 119 and lysine 156 each act as for autocatalytic cleavage activity in the active site.

The protein belongs to the peptidase S24 family. Homodimer.

It carries out the reaction Hydrolysis of Ala-|-Gly bond in repressor LexA.. In terms of biological role, represses a number of genes involved in the response to DNA damage (SOS response), including recA and lexA. Binds to the 16 bp palindromic sequence 5'-CTGTATATATATACAG-3'. In the presence of single-stranded DNA, RecA interacts with LexA causing an autocatalytic cleavage which disrupts the DNA-binding part of LexA, leading to derepression of the SOS regulon and eventually DNA repair. This chain is LexA repressor, found in Klebsiella pneumoniae (strain 342).